The chain runs to 225 residues: Phosphoglycolate phosphatase (225 aa).

Catalysis depends on Asp11, which acts as the Nucleophile. Asp11 and Asp13 together coordinate Mg(2+). A substrate-binding site is contributed by Lys153. Mg(2+) is bound by residues Asp176 and Asp180.

It belongs to the archaeal SPP-like hydrolase family. Mg(2+) serves as cofactor.

It carries out the reaction 2-phosphoglycolate + H2O = glycolate + phosphate. Catalyzes the dephosphorylation of 2-phosphoglycolate. The sequence is that of Phosphoglycolate phosphatase from Halobacterium salinarum (strain ATCC 29341 / DSM 671 / R1).